We begin with the raw amino-acid sequence, 311 residues long: tRNA-cytidine(32) 2-sulfurtransferase (311 aa).

Positions 47–52 match the PP-loop motif motif; sequence SGGKDS. 3 residues coordinate [4Fe-4S] cluster: Cys-122, Cys-125, and Cys-213.

It belongs to the TtcA family. As to quaternary structure, homodimer. Mg(2+) is required as a cofactor. It depends on [4Fe-4S] cluster as a cofactor.

It is found in the cytoplasm. The catalysed reaction is cytidine(32) in tRNA + S-sulfanyl-L-cysteinyl-[cysteine desulfurase] + AH2 + ATP = 2-thiocytidine(32) in tRNA + L-cysteinyl-[cysteine desulfurase] + A + AMP + diphosphate + H(+). It functions in the pathway tRNA modification. Functionally, catalyzes the ATP-dependent 2-thiolation of cytidine in position 32 of tRNA, to form 2-thiocytidine (s(2)C32). The sulfur atoms are provided by the cysteine/cysteine desulfurase (IscS) system. The chain is tRNA-cytidine(32) 2-sulfurtransferase from Escherichia coli O45:K1 (strain S88 / ExPEC).